Here is a 352-residue protein sequence, read N- to C-terminus: N-acetyl-gamma-glutamyl-phosphate reductase (352 aa).

Residue Cys-151 is part of the active site.

This sequence belongs to the NAGSA dehydrogenase family. Type 1 subfamily.

It is found in the cytoplasm. The enzyme catalyses N-acetyl-L-glutamate 5-semialdehyde + phosphate + NADP(+) = N-acetyl-L-glutamyl 5-phosphate + NADPH + H(+). It participates in amino-acid biosynthesis; L-arginine biosynthesis; N(2)-acetyl-L-ornithine from L-glutamate: step 3/4. In terms of biological role, catalyzes the NADPH-dependent reduction of N-acetyl-5-glutamyl phosphate to yield N-acetyl-L-glutamate 5-semialdehyde. This chain is N-acetyl-gamma-glutamyl-phosphate reductase, found in Renibacterium salmoninarum (strain ATCC 33209 / DSM 20767 / JCM 11484 / NBRC 15589 / NCIMB 2235).